We begin with the raw amino-acid sequence, 277 residues long: Thymidylate synthase (277 aa).

DUMP is bound at residue arginine 21. Residue histidine 51 participates in (6R)-5,10-methylene-5,6,7,8-tetrahydrofolate binding. 126–127 (RR) serves as a coordination point for dUMP. Residue cysteine 159 is the Nucleophile of the active site. Residues 179–182 (RSSD), asparagine 190, and 220–222 (HAY) contribute to the dUMP site. Aspartate 182 contributes to the (6R)-5,10-methylene-5,6,7,8-tetrahydrofolate binding site. A (6R)-5,10-methylene-5,6,7,8-tetrahydrofolate-binding site is contributed by alanine 276.

Belongs to the thymidylate synthase family. Bacterial-type ThyA subfamily. As to quaternary structure, homodimer.

It localises to the cytoplasm. The enzyme catalyses dUMP + (6R)-5,10-methylene-5,6,7,8-tetrahydrofolate = 7,8-dihydrofolate + dTMP. The protein operates within pyrimidine metabolism; dTTP biosynthesis. In terms of biological role, catalyzes the reductive methylation of 2'-deoxyuridine-5'-monophosphate (dUMP) to 2'-deoxythymidine-5'-monophosphate (dTMP) while utilizing 5,10-methylenetetrahydrofolate (mTHF) as the methyl donor and reductant in the reaction, yielding dihydrofolate (DHF) as a by-product. This enzymatic reaction provides an intracellular de novo source of dTMP, an essential precursor for DNA biosynthesis. This is Thymidylate synthase from Pseudomonas fluorescens (strain SBW25).